We begin with the raw amino-acid sequence, 185 residues long: Peptidoglycan-recognition protein SC1a (185 aa).

Residues 1–21 form the signal peptide; the sequence is MVSKVALLLAVLVCSQYMAQG. Positions 46–170 constitute an N-acetylmuramoyl-L-alanine amidase domain; that stretch reads SYAIIHHTAG…RQVSATECPG (125 aa). His-51 is a Zn(2+) binding site. Residues Cys-58 and Cys-64 are joined by a disulfide bond. Zn(2+)-binding residues include His-160 and Cys-168.

Belongs to the N-acetylmuramoyl-L-alanine amidase 2 family. Requires Zn(2+) as cofactor.

The protein localises to the secreted. The enzyme catalyses Hydrolyzes the link between N-acetylmuramoyl residues and L-amino acid residues in certain cell-wall glycopeptides.. In terms of biological role, N-acetylmuramyl-L-alanine amidase involved in innate immunity by degrading bacterial peptidoglycans (PGN). Plays a scavenger role by digesting biologically active PGN into biologically inactive fragments. Has no direct bacteriolytic activity. The chain is Peptidoglycan-recognition protein SC1a from Drosophila melanogaster (Fruit fly).